Here is a 404-residue protein sequence, read N- to C-terminus: Cysteine desulfurase IscS (404 aa).

Pyridoxal 5'-phosphate is bound by residues 75–76 (AT), N155, Q183, and 203–205 (TGH). Position 206 is an N6-(pyridoxal phosphate)lysine (K206). Residue T243 participates in pyridoxal 5'-phosphate binding. C328 serves as the catalytic Cysteine persulfide intermediate. A [2Fe-2S] cluster-binding site is contributed by C328.

This sequence belongs to the class-V pyridoxal-phosphate-dependent aminotransferase family. NifS/IscS subfamily. Homodimer. Forms a heterotetramer with IscU, interacts with other sulfur acceptors. Pyridoxal 5'-phosphate serves as cofactor.

The protein resides in the cytoplasm. It catalyses the reaction (sulfur carrier)-H + L-cysteine = (sulfur carrier)-SH + L-alanine. The protein operates within cofactor biosynthesis; iron-sulfur cluster biosynthesis. Its function is as follows. Master enzyme that delivers sulfur to a number of partners involved in Fe-S cluster assembly, tRNA modification or cofactor biosynthesis. Catalyzes the removal of elemental sulfur atoms from cysteine to produce alanine. Functions as a sulfur delivery protein for Fe-S cluster synthesis onto IscU, an Fe-S scaffold assembly protein, as well as other S acceptor proteins. This is Cysteine desulfurase IscS from Enterobacter sp. (strain 638).